The sequence spans 217 residues: Somatotropin (217 aa).

The first 26 residues, 1–26, serve as a signal peptide directing secretion; it reads MMAAGPRTSLLLAFALLCLPWTQVVG. His-46 contributes to the Zn(2+) binding site. An intrachain disulfide couples Cys-79 to Cys-190. Ser-132 carries the phosphoserine modification. Glu-199 provides a ligand contact to Zn(2+). The cysteines at positions 207 and 215 are disulfide-linked.

It belongs to the somatotropin/prolactin family.

The protein localises to the secreted. Plays an important role in growth control. Its major role in stimulating body growth is to stimulate the liver and other tissues to secrete IGF1. It stimulates both the differentiation and proliferation of myoblasts. It also stimulates amino acid uptake and protein synthesis in muscle and other tissues. This Bos mutus grunniens (Wild yak) protein is Somatotropin (GH1).